A 159-amino-acid polypeptide reads, in one-letter code: Odorant-binding protein (159 aa).

The protein belongs to the calycin superfamily. Lipocalin family. Homodimer.

It is found in the secreted. Its function is as follows. This protein binds a wide variety of chemical odorants. This Bos taurus (Bovine) protein is Odorant-binding protein.